Here is a 340-residue protein sequence, read N- to C-terminus: Inactive hyaluronidase B (340 aa).

Cystine bridges form between Cys-21-Cys-310 and Cys-187-Cys-199. N-linked (GlcNAc...) asparagine glycans are attached at residues Asn-66 and Asn-81.

It belongs to the glycosyl hydrolase 56 family. N-glycosylated on at least two Asn residues by identical heptasaccharide units composed of Man, GlcNAc, and Fuc residues in the molar ration of 3:2:2. Expressed by the venom gland.

Its subcellular location is the secreted. Functionally, has no hyaluronidase activity. The protein is Inactive hyaluronidase B of Vespula vulgaris (Yellow jacket).